A 600-amino-acid chain; its full sequence is Lamin-B2 (600 aa).

The tract at residues 2–27 is head; sequence SGTPIRGTPGGTPLSPTRISRLQEKE. Serine 16 is modified (phosphoserine; by CDK1). The IF rod domain occupies 25-381; the sequence is EKEELRQLND…KLLEGEEERL (357 aa). The coil 1A stretch occupies residues 28-64; sequence ELRQLNDRLAVYIDRVRALELENDRLLVKISEKEEVT. Residues 75–212 form a coil 1B region; sequence YESELADARR…NVFEEEIRET (138 aa). The coil 2 stretch occupies residues 237 to 379; it reads QALEDLRNQH…YRKLLEGEEE (143 aa). 2 disordered regions span residues 377–449 and 568–600; these read EEER…QMSQ and ENEE…CLVM. Positions 380 to 600 are tail; the sequence is RLKLSPSPSS…RTTSRGCLVM (221 aa). Over residues 383 to 410 the composition is skewed to low complexity; that stretch reads LSPSPSSRVTVSRATSSSSSSSTSLVRS. Position 386 is a phosphoserine (serine 386). The short motif at 414 to 419 is the Nuclear localization signal element; the sequence is KRRRIE. The LTD domain occupies 445 to 562; the sequence is FQMSQQASAT…EEVAVRTVTK (118 aa). The span at 569–583 shows a compositional bias: acidic residues; that stretch reads NEEEEDEADFGEEDL. The segment covering 584–600 has biased composition (polar residues); it reads FNQQGDPRTTSRGCLVM. Cysteine 597 carries the post-translational modification Cysteine methyl ester. Residue cysteine 597 is the site of S-farnesyl cysteine attachment. Positions 598-600 are cleaved as a propeptide — removed in mature form; it reads LVM.

This sequence belongs to the intermediate filament family. Homodimer. Lamin dimers then assemble into dimeric head-to-tail polymers. Ultimately, two head-to-tail polymers assemble laterally into a protofilament with a uniformly shaped rod of 3.5 nm in diameter. Phosphorylation plays a key role in lamin organization, subcellular localization and nuclear envelope disintegration. Phosphorylation by CDK1 at Ser-16 at the onset of mitosis drives lamin disassembly and nuclear envelope breakdown.

It localises to the nucleus lamina. Its subcellular location is the nucleus envelope. The protein resides in the nucleus. The protein localises to the nucleoplasm. It is found in the nucleus matrix. Lamins are intermediate filament proteins that assemble into a filamentous meshwork, and which constitute the major components of the nuclear lamina, a fibrous layer on the nucleoplasmic side of the inner nuclear membrane. Lamins provide a framework for the nuclear envelope, bridging the nuclear envelope and chromatin. Plays an important role in nuclear assembly, chromatin organization, nuclear membrane and telomere dynamics. In Gallus gallus (Chicken), this protein is Lamin-B2 (LMNB2).